The following is a 513-amino-acid chain: 2-isopropylmalate synthase (513 aa).

In terms of domain architecture, Pyruvate carboxyltransferase spans 5–268 (LIIFDTTLRD…DVGVDTTQIV (264 aa)). Residues D14, H202, H204, and N239 each contribute to the Mn(2+) site. The segment at 394–513 (RFVSLSQRSE…KSSEKLNPQI (120 aa)) is regulatory domain.

It belongs to the alpha-IPM synthase/homocitrate synthase family. LeuA type 1 subfamily. As to quaternary structure, homodimer. The cofactor is Mn(2+).

It is found in the cytoplasm. The enzyme catalyses 3-methyl-2-oxobutanoate + acetyl-CoA + H2O = (2S)-2-isopropylmalate + CoA + H(+). It participates in amino-acid biosynthesis; L-leucine biosynthesis; L-leucine from 3-methyl-2-oxobutanoate: step 1/4. Functionally, catalyzes the condensation of the acetyl group of acetyl-CoA with 3-methyl-2-oxobutanoate (2-ketoisovalerate) to form 3-carboxy-3-hydroxy-4-methylpentanoate (2-isopropylmalate). This is 2-isopropylmalate synthase from Ralstonia nicotianae (strain ATCC BAA-1114 / GMI1000) (Ralstonia solanacearum).